The primary structure comprises 288 residues: Mycothiol S-conjugate amidase (288 aa).

Zn(2+)-binding residues include His12, Asp15, and His142.

It belongs to the MshB deacetylase family. Mca subfamily. In terms of assembly, monomer. Zn(2+) serves as cofactor.

The catalysed reaction is mycothiol S-conjugate + H2O = an N-acetyl-L-cysteine-S-conjugate + 1D-myo-inositol 2-amino-2-deoxy-alpha-D-glucopyranoside. With respect to regulation, partially inhibited by MSH when MSmB is used as substrate. Competitively inhibited by the GlcNAc-cyclohexyl derivative 5-(4-chlorophenyl)-N-((2R,3R,4R,5S,6R)-2-(cyclohexylthio)-tetrahydro-4,5-dihydroxy-6-(hydroxymethyl)-2H-pyran-3-yl)furan-2-carboxamide, which also inhibits MshB. Its function is as follows. A mycothiol (MSH, N-acetyl-cysteinyl-glucosaminyl-inositol) S-conjugate amidase, it recycles conjugated MSH to the N-acetyl cysteine conjugate and the MSH precursor. Involved in MSH-dependent detoxification of a number of alkylating agents and antibiotics. Activity is specific for the mycothiol moiety. Has a low but measurable deacetylation activity on GlcNAc-Ins (N-acetyl-glucosaminyl-inositol), and thus can also directly contribute to the production of MSH. The polypeptide is Mycothiol S-conjugate amidase (Mycobacterium tuberculosis (strain ATCC 25618 / H37Rv)).